Here is a 921-residue protein sequence, read N- to C-terminus: Protein translocase subunit SecA (921 aa).

ATP-binding positions include glutamine 87, 105–109 (GEGKT), and aspartate 515. A disordered region spans residues 575-594 (RRIDNQLRGRSGRQGDPGSS). Positions 905, 907, 916, and 917 each coordinate Zn(2+).

Belongs to the SecA family. As to quaternary structure, monomer and homodimer. Part of the essential Sec protein translocation apparatus which comprises SecA, SecYEG and auxiliary proteins SecDF-YajC and YidC. Requires Zn(2+) as cofactor.

The protein resides in the cell inner membrane. It is found in the cytoplasm. It carries out the reaction ATP + H2O + cellular proteinSide 1 = ADP + phosphate + cellular proteinSide 2.. Functionally, part of the Sec protein translocase complex. Interacts with the SecYEG preprotein conducting channel. Has a central role in coupling the hydrolysis of ATP to the transfer of proteins into and across the cell membrane, serving both as a receptor for the preprotein-SecB complex and as an ATP-driven molecular motor driving the stepwise translocation of polypeptide chains across the membrane. This chain is Protein translocase subunit SecA, found in Polynucleobacter necessarius subsp. necessarius (strain STIR1).